The primary structure comprises 1251 residues: Phospholipid-transporting ATPase IC (1251 aa).

The interval 1–52 is disordered; that stretch reads MSTERDSETTFDEESQPNDEVVPYSDDETEDELEDQGSTVEPEQNRVNREAE. Over 1–121 the chain is Cytoplasmic; sequence MSTERDSETT…LFEQFKRAAN (121 aa). Over residues 25–35 the composition is skewed to acidic residues; sequence SDDETEDELED. The segment covering 43-52 has biased composition (basic and acidic residues); it reads EQNRVNREAE. Residues 122–142 traverse the membrane as a helical segment; the sequence is FYFLILLILQAIPQISTLAWY. At 143–144 the chain is on the exoplasmic loop side; that stretch reads TT. The chain crosses the membrane as a helical span at residues 145–165; sequence LVPLLLVLGITAIKDLVDDVA. Over 166–339 the chain is Cytoplasmic; that stretch reads RHKMDKEINN…RTKIDYLMNY (174 aa). Residues 340 to 360 traverse the membrane as a helical segment; it reads MVYTIFIVLILVSAGLAIGHA. Residues 361–385 lie on the Exoplasmic loop side of the membrane; sequence YWEAQVGNYSWYLYDGENATPSYRG. Residues 386-406 traverse the membrane as a helical segment; that stretch reads FLNFWGYIIVLNTMVPISLYV. At 407–952 the chain is on the cytoplasmic side; the sequence is SVEVIRLGQS…SYIRMCKFLR (546 aa). Asp-454 serves as the catalytic 4-aspartylphosphate intermediate. Residues Asp-454, Lys-455, Thr-456, Glu-555, Phe-596, Lys-619, Arg-652, Thr-732, Gly-733, Asp-734, Arg-867, and Lys-873 each coordinate ATP. Asp-454 provides a ligand contact to Mg(2+). Thr-456 lines the Mg(2+) pocket. Asp-893 is a binding site for Mg(2+). ATP contacts are provided by Asn-896 and Asp-897. Asp-897 contributes to the Mg(2+) binding site. The chain crosses the membrane as a helical span at residues 953–973; it reads YFFYKNFAFTLVHFWYSFFNG. At 974–982 the chain is on the exoplasmic loop side; sequence YSAQTAYED. Residues 983–1003 form a helical membrane-spanning segment; the sequence is WFITLYNVLYSSLPVLLMGLL. The Cytoplasmic segment spans residues 1004–1032; it reads DQDVSDKLSLRFPGLYVVGQRDLLFNYKR. A helical transmembrane segment spans residues 1033 to 1053; that stretch reads FFVSLLHGVLTSMVLFFIPLG. The Exoplasmic loop portion of the chain corresponds to 1054 to 1071; it reads AYLQTVGQDGEAPSDYQS. Residues 1072–1092 form a helical membrane-spanning segment; that stretch reads FAVTVASALVITVNFQIGLDT. At 1093-1094 the chain is on the cytoplasmic side; the sequence is SY. Residues 1095–1115 form a helical membrane-spanning segment; it reads WTFVNAFSIFGSIALYFGIMF. The Exoplasmic loop portion of the chain corresponds to 1116–1142; sequence DFHSAGIHVLFPSAFQFTGTASNALRQ. Residues 1143–1163 traverse the membrane as a helical segment; it reads PYIWLTIILTVAVCLLPVVAI. The Cytoplasmic portion of the chain corresponds to 1164 to 1251; sequence RFLSMTIWPS…TAEYRRTVES (88 aa). Ser-1223 bears the Phosphoserine mark.

This sequence belongs to the cation transport ATPase (P-type) (TC 3.A.3) family. Type IV subfamily. As to quaternary structure, component of a P4-ATPase flippase complex which consists of a catalytic alpha subunit ATP8B1 and an accessory beta subunit TMEM30A. The flippase ATP8B1:TMEM30A complex can form an intermediate phosphoenzyme in vitro. Also interacts with beta subunit TMEM30B. Mg(2+) serves as cofactor. In terms of tissue distribution, hepatocytes, bile duct, intestinal epithelial cells (cholangiocytes and ileocytes), and pancreatic acinar cells.

It is found in the cell membrane. The protein localises to the apical cell membrane. The protein resides in the cell projection. It localises to the stereocilium. Its subcellular location is the endoplasmic reticulum. It is found in the golgi apparatus. It catalyses the reaction ATP + H2O + phospholipidSide 1 = ADP + phosphate + phospholipidSide 2.. The enzyme catalyses a 1,2-diacyl-sn-glycero-3-phosphocholine(out) + ATP + H2O = a 1,2-diacyl-sn-glycero-3-phosphocholine(in) + ADP + phosphate + H(+). It carries out the reaction a 1,2-diacyl-sn-glycero-3-phospho-L-serine(out) + ATP + H2O = a 1,2-diacyl-sn-glycero-3-phospho-L-serine(in) + ADP + phosphate + H(+). Its function is as follows. Catalytic component of a P4-ATPase flippase complex which catalyzes the hydrolysis of ATP coupled to the transport of phospholipids, in particular phosphatidylcholines (PC), from the outer to the inner leaflet of the plasma membrane. May participate in the establishment of the canalicular membrane integrity by ensuring asymmetric distribution of phospholipids in the canicular membrane. Thus may have a role in the regulation of bile acids transport into the canaliculus, uptake of bile acids from intestinal contents into intestinal mucosa or both and protect hepatocytes from bile salts. Involved in the microvillus formation in polarized epithelial cells; the function seems to be independent from its flippase activity. Participates in correct apical membrane localization of CDC42, CFTR and SLC10A2. Enables CDC42 clustering at the apical membrane during enterocyte polarization through the interaction between CDC42 polybasic region and negatively charged membrane lipids provided by ATP8B1. Together with TMEM30A is involved in uptake of the synthetic drug alkylphospholipid perifosine. Required for the preservation of cochlear hair cells in the inner ear. According PubMed:20852622 is proposed to act as cardiolipin transporter during inflammatory injury; the function is questioned by PubMed:21475228. The polypeptide is Phospholipid-transporting ATPase IC (Mus musculus (Mouse)).